The primary structure comprises 404 residues: Arginine biosynthesis bifunctional protein ArgJ (404 aa).

T156, K182, T193, E277, N399, and S404 together coordinate substrate. The Nucleophile role is filled by T193.

Belongs to the ArgJ family. Heterotetramer of two alpha and two beta chains.

It localises to the cytoplasm. It catalyses the reaction N(2)-acetyl-L-ornithine + L-glutamate = N-acetyl-L-glutamate + L-ornithine. The catalysed reaction is L-glutamate + acetyl-CoA = N-acetyl-L-glutamate + CoA + H(+). It functions in the pathway amino-acid biosynthesis; L-arginine biosynthesis; L-ornithine and N-acetyl-L-glutamate from L-glutamate and N(2)-acetyl-L-ornithine (cyclic): step 1/1. It participates in amino-acid biosynthesis; L-arginine biosynthesis; N(2)-acetyl-L-ornithine from L-glutamate: step 1/4. In terms of biological role, catalyzes two activities which are involved in the cyclic version of arginine biosynthesis: the synthesis of N-acetylglutamate from glutamate and acetyl-CoA as the acetyl donor, and of ornithine by transacetylation between N(2)-acetylornithine and glutamate. The sequence is that of Arginine biosynthesis bifunctional protein ArgJ from Chlorobaculum tepidum (strain ATCC 49652 / DSM 12025 / NBRC 103806 / TLS) (Chlorobium tepidum).